We begin with the raw amino-acid sequence, 76 residues long: DNA-directed RNA polymerase subunit omega (76 aa).

It belongs to the RNA polymerase subunit omega family. In terms of assembly, in cyanobacteria the RNAP catalytic core is composed of 2 alpha, 1 beta, 1 beta', 1 gamma and 1 omega subunit. When a sigma factor is associated with the core the holoenzyme is formed, which can initiate transcription.

It catalyses the reaction RNA(n) + a ribonucleoside 5'-triphosphate = RNA(n+1) + diphosphate. Functionally, promotes RNA polymerase assembly. Latches the N- and C-terminal regions of the beta' subunit thereby facilitating its interaction with the beta and alpha subunits. The protein is DNA-directed RNA polymerase subunit omega of Synechococcus elongatus (strain ATCC 33912 / PCC 7942 / FACHB-805) (Anacystis nidulans R2).